We begin with the raw amino-acid sequence, 316 residues long: DNA-directed RNA polymerase III subunit RPC6 (316 aa).

Ala2 bears the N-acetylalanine mark. Residues Lys5 and Lys7 each participate in a glycyl lysine isopeptide (Lys-Gly) (interchain with G-Cter in SUMO2) cross-link. [4Fe-4S] cluster is bound by residues Cys287, Cys290, Cys296, and Cys307.

Belongs to the eukaryotic RPC34/RPC39 RNA polymerase subunit family. Component of the RNA polymerase III complex consisting of 17 subunits: a ten-subunit horseshoe-shaped catalytic core composed of POLR3A/RPC1, POLR3B/RPC2, POLR1C/RPAC1, POLR1D/RPAC2, POLR3K/RPC10, POLR2E/RPABC1, POLR2F/RPABC2, POLR2H/RPABC3, POLR2K/RPABC4 and POLR2L/RPABC5; a mobile stalk composed of two subunits POLR3H/RPC8 and CRCP/RPC9, protruding from the core and functioning primarily in transcription initiation; and additional subunits homologous to general transcription factors of the RNA polymerase II machinery, POLR3C/RPC3-POLR3F/RPC6-POLR3G/RPC7 heterotrimer required for transcription initiation and POLR3D/RPC4-POLR3E/RPC5 heterodimer involved in both transcription initiation and termination. Directly interacts with POLR3C. Interacts with TBP and TFIIIB90 and GTF3C4. Interacts with MAF1. As part of the RNA polymerase III complex, interacts with PKP2.

It is found in the nucleus. Functionally, DNA-dependent RNA polymerase catalyzes the transcription of DNA into RNA using the four ribonucleoside triphosphates as substrates. Specific peripheric component of RNA polymerase III (Pol III) which synthesizes small non-coding RNAs including 5S rRNA, snRNAs, tRNAs and miRNAs from at least 500 distinct genomic loci. Part of POLR3C/RPC3-POLR3F/RPC6-POLR3G/RPC7 heterotrimer that coordinates the dynamics of Pol III stalk and clamp modules during the transition from apo to elongation state. Pol III plays a key role in sensing and limiting infection by intracellular bacteria and DNA viruses, including varicella zoster virus. Acts as a nuclear and cytosolic DNA sensor detecting AT-rich DNA, involved in innate immune response. Can sense non-self dsDNA that serves as template for transcription into dsRNA. The non-self RNA polymerase III transcripts, such as Epstein-Barr virus-encoded RNAs (EBERs) induce type I interferon and NF-kappa-B through the RIG-I pathway. Preferentially binds double-stranded DNA (dsDNA). This chain is DNA-directed RNA polymerase III subunit RPC6 (POLR3F), found in Bos taurus (Bovine).